We begin with the raw amino-acid sequence, 261 residues long: Undecaprenyl-diphosphatase (261 aa).

8 helical membrane passes run 1–21 (MNYI…FLPV), 41–61 (FTKL…VVLY), 69–89 (LDFY…GLLF), 95–115 (ALLE…IILL), 129–149 (ITYL…IPGV), 169–186 (AAEF…GATL), 206–226 (ILII…KTFI), and 241–261 (RIVA…LTLI).

This sequence belongs to the UppP family.

The protein localises to the cell inner membrane. The enzyme catalyses di-trans,octa-cis-undecaprenyl diphosphate + H2O = di-trans,octa-cis-undecaprenyl phosphate + phosphate + H(+). Catalyzes the dephosphorylation of undecaprenyl diphosphate (UPP). Confers resistance to bacitracin. This chain is Undecaprenyl-diphosphatase, found in Flavobacterium psychrophilum (strain ATCC 49511 / DSM 21280 / CIP 103535 / JIP02/86).